A 266-amino-acid polypeptide reads, in one-letter code: uncharacterized protein (266 aa).

The helical transmembrane segment at 13 to 33 (IIGLMLIIFAGILFYAYILQH) threads the bilayer.

The protein belongs to the LicD transferase family.

It localises to the membrane. This is an uncharacterized protein from Rickettsia prowazekii (strain Madrid E).